The following is a 507-amino-acid chain: ATP synthase subunit alpha, chloroplastic (507 aa).

170 to 177 is an ATP binding site; the sequence is GDRQTGKT.

It belongs to the ATPase alpha/beta chains family. In terms of assembly, F-type ATPases have 2 components, CF(1) - the catalytic core - and CF(0) - the membrane proton channel. CF(1) has five subunits: alpha(3), beta(3), gamma(1), delta(1), epsilon(1). CF(0) has four main subunits: a, b, b' and c.

The protein localises to the plastid. It is found in the chloroplast thylakoid membrane. It carries out the reaction ATP + H2O + 4 H(+)(in) = ADP + phosphate + 5 H(+)(out). Produces ATP from ADP in the presence of a proton gradient across the membrane. The alpha chain is a regulatory subunit. This chain is ATP synthase subunit alpha, chloroplastic, found in Liriodendron tulipifera (Tuliptree).